The sequence spans 537 residues: Actin-histidine N-methyltransferase (537 aa).

A compositionally biased stretch (basic residues) spans 1-12 (MGKNTKRNKKTK). The tract at residues 1–50 (MGKNTKRNKKTKQQQQQPQQNGVTASASGTAVEDFEDQQAASSLPSLNGK) is disordered. Residues arginine 114, 143–145 (YQL), arginine 299, 325–329 (DMANH), and 375–377 (NGF) each bind S-adenosyl-L-methionine. In terms of domain architecture, SET spans 133-364 (EGLEIAIFPG…TGEQFFIYYG (232 aa)).

The protein belongs to the class V-like SAM-binding methyltransferase superfamily. SETD3 actin-histidine methyltransferase family.

It is found in the cytoplasm. The protein localises to the nucleus. The catalysed reaction is L-histidyl-[protein] + S-adenosyl-L-methionine = N(tele)-methyl-L-histidyl-[protein] + S-adenosyl-L-homocysteine + H(+). Functionally, protein-histidine N-methyltransferase that specifically mediates 3-methylhistidine (tele-methylhistidine) methylation of actin at 'His-74'. In Drosophila melanogaster (Fruit fly), this protein is Actin-histidine N-methyltransferase.